The chain runs to 310 residues: Hairy/enhancer-of-split related with YRPW motif-like protein (310 aa).

Residues 1–21 (MKRPHDYSSPDSDTDELIDVG) form a disordered region. The segment covering 12–21 (SDTDELIDVG) has biased composition (acidic residues). Positions 43 to 98 (ARKKRRGIIEKRRRDRINHSLSELRRLVPSAFEKQGSSKLEKAEILQMTVDHLKLL) constitute a bHLH domain. Residues 116–152 (YRTLGFRECVGEVVRYLSSLEGVESSDPIGARLVSHL) form the Orange domain. Low complexity-rich tracts occupy residues 182 to 192 (LQAASPPASST) and 261 to 273 (PSSS…SSPP). Disordered stretches follow at residues 182 to 208 (LQAA…HGTA) and 248 to 310 (HRLQ…IGAF). The segment covering 293–302 (LSSSSKSAQA) has biased composition (polar residues).

The protein belongs to the HEY family.

It is found in the nucleus. In terms of biological role, transcriptional repressor which functions as a downstream effector of Notch signaling. The sequence is that of Hairy/enhancer-of-split related with YRPW motif-like protein (heyl) from Danio rerio (Zebrafish).